A 484-amino-acid polypeptide reads, in one-letter code: tRNA sulfurtransferase (484 aa).

The region spanning 63–167 is the THUMP domain; that stretch reads QGIRERLSCM…DQRLFVVHDQ (105 aa). ATP contacts are provided by residues 185 to 186, Lys267, Gly289, and Gln298; that span reads LM. A disulfide bridge connects residues Cys346 and Cys457. The region spanning 405–483 is the Rhodanese domain; sequence ALAGQVILDI…GHANVRVYRP (79 aa). The Cysteine persulfide intermediate role is filled by Cys457.

Belongs to the ThiI family.

Its subcellular location is the cytoplasm. It carries out the reaction [ThiI sulfur-carrier protein]-S-sulfanyl-L-cysteine + a uridine in tRNA + 2 reduced [2Fe-2S]-[ferredoxin] + ATP + H(+) = [ThiI sulfur-carrier protein]-L-cysteine + a 4-thiouridine in tRNA + 2 oxidized [2Fe-2S]-[ferredoxin] + AMP + diphosphate. The catalysed reaction is [ThiS sulfur-carrier protein]-C-terminal Gly-Gly-AMP + S-sulfanyl-L-cysteinyl-[cysteine desulfurase] + AH2 = [ThiS sulfur-carrier protein]-C-terminal-Gly-aminoethanethioate + L-cysteinyl-[cysteine desulfurase] + A + AMP + 2 H(+). It functions in the pathway cofactor biosynthesis; thiamine diphosphate biosynthesis. In terms of biological role, catalyzes the ATP-dependent transfer of a sulfur to tRNA to produce 4-thiouridine in position 8 of tRNAs, which functions as a near-UV photosensor. Also catalyzes the transfer of sulfur to the sulfur carrier protein ThiS, forming ThiS-thiocarboxylate. This is a step in the synthesis of thiazole, in the thiamine biosynthesis pathway. The sulfur is donated as persulfide by IscS. The chain is tRNA sulfurtransferase from Pseudomonas syringae pv. syringae (strain B728a).